The primary structure comprises 447 residues: Diaminopimelate decarboxylase (447 aa).

Lysine 72 is subject to N6-(pyridoxal phosphate)lysine. Residues glycine 258 and 300 to 303 (EPGR) contribute to the pyridoxal 5'-phosphate site. Arginine 303, arginine 344, and tyrosine 348 together coordinate substrate. Catalysis depends on cysteine 375, which acts as the Proton donor. Substrate is bound by residues glutamate 376 and tyrosine 405. Tyrosine 405 is a binding site for pyridoxal 5'-phosphate.

This sequence belongs to the Orn/Lys/Arg decarboxylase class-II family. LysA subfamily. In terms of assembly, homodimer. Requires pyridoxal 5'-phosphate as cofactor.

The catalysed reaction is meso-2,6-diaminopimelate + H(+) = L-lysine + CO2. The protein operates within amino-acid biosynthesis; L-lysine biosynthesis via DAP pathway; L-lysine from DL-2,6-diaminopimelate: step 1/1. Specifically catalyzes the decarboxylation of meso-diaminopimelate (meso-DAP) to L-lysine. The polypeptide is Diaminopimelate decarboxylase (Mycobacterium bovis (strain ATCC BAA-935 / AF2122/97)).